Here is a 561-residue protein sequence, read N- to C-terminus: Asparagine synthetase [glutamine-hydrolyzing] (561 aa).

Cys2 functions as the For GATase activity in the catalytic mechanism. A Glutamine amidotransferase type-2 domain is found at 2–191 (CGIWALFGSD…PGHYEVLDLK (190 aa)). Residues 49–53 (RLAVV), 75–77 (NGE), and Asp97 contribute to the L-glutamine site. The Asparagine synthetase domain occupies 213 to 536 (HALYDNVEKL…PGRADWLSHY (324 aa)). ATP-binding positions include Leu256, Ile288, and 363-364 (SG). An N6-acetyllysine modification is found at Lys385. Residue Thr545 is modified to Phosphothreonine. Ser557 bears the Phosphoserine mark.

It carries out the reaction L-aspartate + L-glutamine + ATP + H2O = L-asparagine + L-glutamate + AMP + diphosphate + H(+). It functions in the pathway amino-acid biosynthesis; L-asparagine biosynthesis; L-asparagine from L-aspartate (L-Gln route): step 1/1. The polypeptide is Asparagine synthetase [glutamine-hydrolyzing] (ASNS) (Pongo abelii (Sumatran orangutan)).